We begin with the raw amino-acid sequence, 501 residues long: Inactive cytidine monophosphate-N-acetylneuraminic acid hydroxylase (501 aa).

It belongs to the CMP-Neu5Ac hydroxylase family. Widely expressed. Highly expressed in thymus. Not expressed in brain. May be expressed in adult stem cells (at protein level).

It is found in the cytoplasm. In terms of biological role, sialic acids are components of carbohydrate chains of glycoconjugates and are involved in cell-cell recognition and cell-pathogen interactions. That protein has no CMP-N-acetylneuraminate monooxygenase activity and is not able to convert CMP-N-acetylneuraminic acid (CMP-Neu5Ac) into its hydroxylated derivative CMP-N-glycolylneuraminic acid (CMP-Neu5Gc), a sialic acid abundantly expressed at the surface of many cells in vertebrates. However, it may play a role in Wnt signaling. The chain is Inactive cytidine monophosphate-N-acetylneuraminic acid hydroxylase (CMAHP) from Homo sapiens (Human).